A 390-amino-acid polypeptide reads, in one-letter code: Zinc transporter 8 (390 aa).

An N-terminal signal peptide occupies residues 1–25; it reads MRTNTTATVLLAAAVALLLATAARG. The N-linked (GlcNAc...) asparagine glycan is linked to N4. At 26–50 the chain is on the extracellular side; that stretch reads DGGDGGCGKEDAAAGRDRARARGLK. A helical transmembrane segment spans residues 51 to 71; that stretch reads IAAFFSILVCGALGCGLPSLG. The Cytoplasmic portion of the chain corresponds to 72–82; that stretch reads RHVPALRPDGD. A helical membrane pass occupies residues 83-103; that stretch reads VFFLVKAFAAGVILATGFIHI. Residues 104 to 124 are Extracellular-facing; that stretch reads LPDAFDNLTDDCLPAGGPWKE. The N-linked (GlcNAc...) asparagine glycan is linked to N110. The helical transmembrane segment at 125–145 threads the bilayer; sequence FPFAGFGAMVGAIGTLVVDTL. Topologically, residues 146–235 are cytoplasmic; it reads ATGYFTRALS…DDKETTLRHR (90 aa). The tract at residues 165–199 is disordered; that stretch reads VADEEKQSAAATQQHNHHHNHHVVGDGGGGGEEHE. A helical membrane pass occupies residues 236–256; the sequence is VISQVLELGIVVHSVIIGISL. Residues 257–267 are Extracellular-facing; it reads GASQNPETIKP. The helical transmembrane segment at 268–288 threads the bilayer; the sequence is LVVALSFHQMFEGMGLGGCIV. Residues 289–296 are Cytoplasmic-facing; the sequence is QAKFKVRS. Residues 297 to 317 traverse the membrane as a helical segment; it reads IVTMVLFFCLTTPVGIAVGVG. The Extracellular segment spans residues 318–329; it reads ISSVYNESSPTA. N-linked (GlcNAc...) asparagine glycosylation is present at N323. Residues 330–350 traverse the membrane as a helical segment; that stretch reads LVVEGILNSVAAGILIYMALV. The Cytoplasmic portion of the chain corresponds to 351-369; sequence DLLAEDFMNPRVQSKGKLQ. A helical transmembrane segment spans residues 370 to 390; the sequence is LGINLAMLAGAGLMSMLAKWA.

Belongs to the ZIP transporter (TC 2.A.5) family.

Its subcellular location is the cell membrane. In terms of biological role, zinc transporter that may mediate zinc uptake from the rhizosphere and may be responsible for the translocation of zinc within the plant. In Oryza sativa subsp. japonica (Rice), this protein is Zinc transporter 8 (ZIP8).